Here is a 290-residue protein sequence, read N- to C-terminus: Pirin (290 aa).

Residues His-56, His-58, His-101, and Glu-103 each contribute to the Fe cation site.

Belongs to the pirin family. As to quaternary structure, may interact with NF1/CTF1. Interacts with BCL3. Identified in a complex comprised of PIR, BLC3, NFKB1 and target DNA. Fe cation is required as a cofactor. As to expression, weakly expressed in bone marrow.

Its subcellular location is the nucleus. It localises to the cytoplasm. The enzyme catalyses quercetin + O2 = 2-(3,4-dihydroxybenzoyloxy)-4,6-dihydroxybenzoate + CO. The protein operates within flavonoid metabolism; quercetin degradation. Its function is as follows. Transcriptional coregulator of NF-kappa-B which facilitates binding of NF-kappa-B proteins to target kappa-B genes in a redox-state-dependent manner. May be required for efficient terminal myeloid maturation of hematopoietic cells. Has quercetin 2,3-dioxygenase activity (in vitro). The sequence is that of Pirin (Pir) from Mus musculus (Mouse).